We begin with the raw amino-acid sequence, 105 residues long: Small ribosomal subunit protein bS18 (105 aa).

The tract at residues 1-34 (MMINKEQDLNQLETNQEQSVEQNQTDEKRKPKPN) is disordered. The segment covering 9–23 (LNQLETNQEQSVEQN) has biased composition (polar residues).

The protein belongs to the bacterial ribosomal protein bS18 family. As to quaternary structure, part of the 30S ribosomal subunit. Forms a tight heterodimer with protein bS6.

In terms of biological role, binds as a heterodimer with protein bS6 to the central domain of the 16S rRNA, where it helps stabilize the platform of the 30S subunit. This is Small ribosomal subunit protein bS18 from Mycoplasma genitalium (strain ATCC 33530 / DSM 19775 / NCTC 10195 / G37) (Mycoplasmoides genitalium).